A 146-amino-acid chain; its full sequence is VHLTAEEKSAVTALWAKVNVEEVGGEALGRLLVVYPWTQRFFEAFGDLSTADAVMKNPKVKAHGKKVLASFSDGLKHLDDLKGTFATLSELHCDKLHVDPENFRLLGNVLVIVLARHFGKEFTPELQAAYQKVVAGVANALAHKYH.

The residue at position 1 (Val1) is an N-acetylvaline. Residues 2–146 (HLTAEEKSAV…VANALAHKYH (145 aa)) form the Globin domain. Thr12 carries the phosphothreonine modification. An N6-acetyllysine modification is found at Lys59. A heme b-binding site is contributed by His63. Lys82 carries the N6-acetyllysine modification. His92 is a heme b binding site. Cys93 carries the post-translational modification S-nitrosocysteine. The residue at position 144 (Lys144) is an N6-acetyllysine.

This sequence belongs to the globin family. Heterotetramer of two alpha chains and two beta chains. In terms of tissue distribution, red blood cells.

Its function is as follows. Involved in oxygen transport from the lung to the various peripheral tissues. The protein is Hemoglobin subunit beta (HBB) of Balaenoptera acutorostrata (Common minke whale).